Reading from the N-terminus, the 386-residue chain is Caspase-12 (386 aa).

The region spanning 1–91 (MAGKRQSQDP…LLSLKSHAEN (91 aa)) is the CARD domain. Position 84 is a phosphoserine (Ser-84). Residues His-218 and Cys-266 contribute to the active site.

The protein belongs to the peptidase C14A family. Heterotetramer that consists of two anti-parallel arranged heterodimers, each one formed by two subunits (Potential). May interact with TRAF2.

Involved in the activation cascade of caspases responsible for apoptosis execution. The chain is Caspase-12 from Canis lupus familiaris (Dog).